Consider the following 158-residue polypeptide: Large ribosomal subunit protein uL30 (158 aa).

Belongs to the universal ribosomal protein uL30 family. As to quaternary structure, part of the 50S ribosomal subunit.

The protein is Large ribosomal subunit protein uL30 of Saccharolobus islandicus (strain Y.G.57.14 / Yellowstone #1) (Sulfolobus islandicus).